A 271-amino-acid chain; its full sequence is Aspartate/glutamate leucyltransferase (271 aa).

This sequence belongs to the R-transferase family. Bpt subfamily.

It localises to the cytoplasm. The enzyme catalyses N-terminal L-glutamyl-[protein] + L-leucyl-tRNA(Leu) = N-terminal L-leucyl-L-glutamyl-[protein] + tRNA(Leu) + H(+). It carries out the reaction N-terminal L-aspartyl-[protein] + L-leucyl-tRNA(Leu) = N-terminal L-leucyl-L-aspartyl-[protein] + tRNA(Leu) + H(+). Its function is as follows. Functions in the N-end rule pathway of protein degradation where it conjugates Leu from its aminoacyl-tRNA to the N-termini of proteins containing an N-terminal aspartate or glutamate. In Acinetobacter baylyi (strain ATCC 33305 / BD413 / ADP1), this protein is Aspartate/glutamate leucyltransferase.